The sequence spans 211 residues: tRNA (pseudouridine(54)-N(1))-methyltransferase (211 aa).

L128, G150, and C183 together coordinate S-adenosyl-L-methionine.

The protein belongs to the methyltransferase superfamily. TrmY family. Homodimer.

It localises to the cytoplasm. It carries out the reaction pseudouridine(54) in tRNA + S-adenosyl-L-methionine = N(1)-methylpseudouridine(54) in tRNA + S-adenosyl-L-homocysteine + H(+). Specifically catalyzes the N1-methylation of pseudouridine at position 54 (Psi54) in tRNAs. In Methanosarcina mazei (strain ATCC BAA-159 / DSM 3647 / Goe1 / Go1 / JCM 11833 / OCM 88) (Methanosarcina frisia), this protein is tRNA (pseudouridine(54)-N(1))-methyltransferase.